The sequence spans 1076 residues: DNA-directed RNA polymerase subunit beta (1076 aa).

Belongs to the RNA polymerase beta chain family. In plastids the minimal PEP RNA polymerase catalytic core is composed of four subunits: alpha, beta, beta', and beta''. When a (nuclear-encoded) sigma factor is associated with the core the holoenzyme is formed, which can initiate transcription.

The protein resides in the plastid. Its subcellular location is the chloroplast. It catalyses the reaction RNA(n) + a ribonucleoside 5'-triphosphate = RNA(n+1) + diphosphate. Its function is as follows. DNA-dependent RNA polymerase catalyzes the transcription of DNA into RNA using the four ribonucleoside triphosphates as substrates. The polypeptide is DNA-directed RNA polymerase subunit beta (Lolium perenne (Perennial ryegrass)).